A 348-amino-acid chain; its full sequence is Holliday junction branch migration complex subunit RuvB (348 aa).

The interval 3–183 (DDGLVSAAAS…FGFTAHLDFY (181 aa)) is large ATPase domain (RuvB-L). ATP is bound by residues Leu22, Arg23, Gly64, Lys67, Thr68, Ser69, 130-132 (EDF), Arg173, Tyr183, and Arg220. Thr68 contacts Mg(2+). The segment at 184–254 (DADELARVLT…IAQAALRIYD (71 aa)) is small ATPAse domain (RuvB-S). Residues 257–348 (GLGLDRLDRA…TQVSLFTEGE (92 aa)) are head domain (RuvB-H). Residues Arg312 and Arg317 each contribute to the DNA site.

This sequence belongs to the RuvB family. Homohexamer. Forms an RuvA(8)-RuvB(12)-Holliday junction (HJ) complex. HJ DNA is sandwiched between 2 RuvA tetramers; dsDNA enters through RuvA and exits via RuvB. An RuvB hexamer assembles on each DNA strand where it exits the tetramer. Each RuvB hexamer is contacted by two RuvA subunits (via domain III) on 2 adjacent RuvB subunits; this complex drives branch migration. In the full resolvosome a probable DNA-RuvA(4)-RuvB(12)-RuvC(2) complex forms which resolves the HJ.

It is found in the cytoplasm. The catalysed reaction is ATP + H2O = ADP + phosphate + H(+). Functionally, the RuvA-RuvB-RuvC complex processes Holliday junction (HJ) DNA during genetic recombination and DNA repair, while the RuvA-RuvB complex plays an important role in the rescue of blocked DNA replication forks via replication fork reversal (RFR). RuvA specifically binds to HJ cruciform DNA, conferring on it an open structure. The RuvB hexamer acts as an ATP-dependent pump, pulling dsDNA into and through the RuvAB complex. RuvB forms 2 homohexamers on either side of HJ DNA bound by 1 or 2 RuvA tetramers; 4 subunits per hexamer contact DNA at a time. Coordinated motions by a converter formed by DNA-disengaged RuvB subunits stimulates ATP hydrolysis and nucleotide exchange. Immobilization of the converter enables RuvB to convert the ATP-contained energy into a lever motion, pulling 2 nucleotides of DNA out of the RuvA tetramer per ATP hydrolyzed, thus driving DNA branch migration. The RuvB motors rotate together with the DNA substrate, which together with the progressing nucleotide cycle form the mechanistic basis for DNA recombination by continuous HJ branch migration. Branch migration allows RuvC to scan DNA until it finds its consensus sequence, where it cleaves and resolves cruciform DNA. The sequence is that of Holliday junction branch migration complex subunit RuvB from Frankia casuarinae (strain DSM 45818 / CECT 9043 / HFP020203 / CcI3).